We begin with the raw amino-acid sequence, 484 residues long: Probable peptide/nitrate transporter At3g43790 (484 aa).

12 consecutive transmembrane segments (helical) span residues 39–59, 76–96, 107–127, 129–149, 168–188, 210–230, 278–298, 318–338, 355–375, 381–401, 416–436, and 460–480; these read FIWL…PYIY, FYAG…SIFW, PIIL…GLST, FWLA…LGVI, VVST…GYLA, FLPS…CWWL, MAII…NEIF, VGEV…LVYP, VLLI…GVTL, CASI…FIML, ISMT…GVLF, and VFLV…IPYI.

It belongs to the major facilitator superfamily.

It is found in the membrane. The protein is Probable peptide/nitrate transporter At3g43790 (ZIFL2) of Arabidopsis thaliana (Mouse-ear cress).